A 178-amino-acid polypeptide reads, in one-letter code: Large ribosomal subunit protein uL6 (178 aa).

It belongs to the universal ribosomal protein uL6 family. Part of the 50S ribosomal subunit.

Its function is as follows. This protein binds to the 23S rRNA, and is important in its secondary structure. It is located near the subunit interface in the base of the L7/L12 stalk, and near the tRNA binding site of the peptidyltransferase center. This chain is Large ribosomal subunit protein uL6, found in Thermobifida fusca (strain YX).